Consider the following 865-residue polypeptide: Anaphase-promoting complex subunit 6 (865 aa).

TPR repeat units follow at residues I11–V42, S46–K75, and E88–L149. The disordered stretch occupies residues N153–F293. Residues N183–K202 are compositionally biased toward acidic residues. Positions N249–N292 are enriched in low complexity. 9 TPR repeats span residues I300–T331, F336–K359, D366–T438, D478–Q506, C515–S542, A573–L602, G607–R635, L642–I670, and P675–S709. Low complexity predominate over residues S403–N434. The tract at residues S403 to I436 is disordered. The segment at G738–S767 is disordered. 2 TPR repeats span residues E777–L809 and P814–I843.

Belongs to the APC6/CDC16 family. As to quaternary structure, the APC/C is composed of at least 13 subunits that stay tightly associated throughout the cell cycle: anapc1, anapc2, anapc3, anapc4, anapc5, anapc6, anapc7, anapc8, anapc10, anapc11, cdc20, cdc26 and cdh1.

It localises to the nucleus. Its pathway is protein modification; protein ubiquitination. Its function is as follows. Component of the anaphase promoting complex/cyclosome (APC/C), a cell cycle-regulated E3 ubiquitin-protein ligase complex that controls progression through mitosis and the G1 phase of the cell cycle. The protein is Anaphase-promoting complex subunit 6 (anapc6) of Dictyostelium discoideum (Social amoeba).